We begin with the raw amino-acid sequence, 162 residues long: Ribosome maturation factor RimP (162 aa).

Belongs to the RimP family.

It localises to the cytoplasm. Required for maturation of 30S ribosomal subunits. The protein is Ribosome maturation factor RimP of Syntrophotalea carbinolica (strain DSM 2380 / NBRC 103641 / GraBd1) (Pelobacter carbinolicus).